A 207-amino-acid polypeptide reads, in one-letter code: D-aminoacyl-tRNA deacylase 1 (207 aa).

A Gly-cisPro motif, important for rejection of L-amino acids motif is present at residues 139 to 140 (GP). Positions 142 to 207 (TIQLESPPAP…EGDVSSEREP (66 aa)) are disordered. Basic and acidic residues-rich tracts occupy residues 156–167 (LLSKQEKQQQRK) and 178–189 (SSREKAAQRSKV).

Belongs to the DTD family. Homodimer.

The protein resides in the cytoplasm. The enzyme catalyses a D-aminoacyl-tRNA + H2O = a tRNA + a D-alpha-amino acid + H(+). The catalysed reaction is glycyl-tRNA(Ala) + H2O = tRNA(Ala) + glycine + H(+). D-aminoacyl-tRNA deacylase, with no observable activity on tRNAs charged with their cognate L-amino acid. Hydrolyzes correctly charged, achiral, glycyl-tRNA(Gly). Deacylates mischarged D.melanogaster and E.coli glycyl-tRNA(Ala), protecting cells against glycine mischarging by AlaRS. Acts via tRNA-based rather than protein-based catalysis; rejects L-amino acids rather than detecting D-amino acids in the active site. By recycling D-aminoacyl-tRNA to D-amino acids and free tRNA molecules, this enzyme counteracts the toxicity associated with the formation of D-aminoacyl-tRNA entities in vivo and helps enforce protein L-homochirality. The protein is D-aminoacyl-tRNA deacylase 1 of Danio rerio (Zebrafish).